Reading from the N-terminus, the 190-residue chain is Inner membrane-spanning protein YciB (190 aa).

Transmembrane regions (helical) follow at residues 3–23 (FLFD…AGIY), 24–44 (VATT…WFKH), 49–69 (AMQW…LIFH), 76–96 (WKPT…VVVV), 121–141 (LVWA…AYNF), and 149–169 (FKLF…SVWL).

This sequence belongs to the YciB family.

It is found in the cell inner membrane. Functionally, plays a role in cell envelope biogenesis, maintenance of cell envelope integrity and membrane homeostasis. The polypeptide is Inner membrane-spanning protein YciB (Ralstonia pickettii (strain 12J)).